The following is a 153-amino-acid chain: Histone H2A.Z-specific chaperone CHZ1 (153 aa).

The segment covering 1 to 29 (MSDEAKEKRELESQKESSHNKSEKSVEPK) has biased composition (basic and acidic residues). Residues 1–153 (MSDEAKEKRE…EDEEDDDFKE (153 aa)) form a disordered region. N-acetylserine is present on Ser-2. Polar residues predominate over residues 56 to 65 (LTKSENNGTV). Phosphoserine occurs at positions 68 and 70. Residues 84-94 (EGEEEEDDLAE) show a composition bias toward acidic residues. The tract at residues 87–108 (EEEDDLAEIDTSNIITSGRRTR) is important for H2A.Z-H2B binding. Positions 110–138 (KVIDYKKTAEELDKKEPSTGSKDDVGYGE) are enriched in basic and acidic residues. The span at 139–153 (KEEDDEDEEDDDFKE) shows a compositional bias: acidic residues.

Belongs to the CHZ1 family. Forms a heterotrimer with H2A.Z-H2B, stabilizing the association of the histone dimer. Also, with a lower affinity, forms a heterotrimer with H2A-H2B.

Its subcellular location is the nucleus. In terms of biological role, forms a chaperone-bound H2A.Z-H2B complex that acts as a source for SWR1 complex-dependent H2A to H2A.Z histone replacement in chromatin. This chain is Histone H2A.Z-specific chaperone CHZ1 (CHZ1), found in Saccharomyces cerevisiae (strain ATCC 204508 / S288c) (Baker's yeast).